The primary structure comprises 671 residues: Zinc finger and BTB domain-containing protein 16-A (671 aa).

The BTB domain maps to 34–96 (CDVVIMVDSQ…AYTATLQAKV (63 aa)). Disordered stretches follow at residues 130–167 (ENDTEVNMNDGGTEDDEERKGRHGRNLVGSKKHSTEES) and 248–289 (VDES…RSSV). Over residues 270–279 (RSGEPDKNRD) the composition is skewed to basic and acidic residues. Position 283 is a phosphothreonine (threonine 283). 9 C2H2-type zinc fingers span residues 401 to 423 (ERCNVCGAELPDNEAIEQHRKLH), 429 to 451 (YGCELCGKRFLDSLRLRMHLLSH), 458 to 480 (IVCDQCGAQFQKEDALEAHRQIH), 487 to 509 (IFCLLCGKRFQTQTALQQHMEVH), 515 to 537 (YICSECNRTFPSHTALKRHLRSH), 544 to 566 (FECEFCGSCFRDESTLKGHKRIH), 572 to 594 (YECNGCGKKFSLKHQLETHYRVH), 600 to 622 (FECKLCHQRSRDYSAMIKHLRTH), and 628 to 650 (YQCTICLEYCPSLSAMQKHMKGH).

The protein belongs to the krueppel C2H2-type zinc-finger protein family. In terms of assembly, interacts with btbd6a (via BTB domain). Post-translationally, polyubiquitinated, leading to its proteasomal degradation. In terms of tissue distribution, during early stages of primary neurogenesis, expressed in the neural epithelium, with highest levels in the forebrain and midbrain. Also expressed in a posterior-to-anterior gradient in the caudal neural plate at the 3-6 somite stage.

It is found in the nucleus. The protein localises to the cytoplasm. It participates in protein modification; protein ubiquitination. Functionally, probable transcription factor. Probable substrate-recognition component of an E3 ubiquitin-protein ligase complex which mediates the ubiquitination and subsequent proteasomal degradation of target proteins. Inhibits neurogenesis. The protein is Zinc finger and BTB domain-containing protein 16-A of Danio rerio (Zebrafish).